Consider the following 257-residue polypeptide: 1-(5-phosphoribosyl)-5-[(5-phosphoribosylamino)methylideneamino] imidazole-4-carboxamide isomerase (257 aa).

D8 serves as the catalytic Proton acceptor. D129 functions as the Proton donor in the catalytic mechanism.

It belongs to the HisA/HisF family.

Its subcellular location is the cytoplasm. The catalysed reaction is 1-(5-phospho-beta-D-ribosyl)-5-[(5-phospho-beta-D-ribosylamino)methylideneamino]imidazole-4-carboxamide = 5-[(5-phospho-1-deoxy-D-ribulos-1-ylimino)methylamino]-1-(5-phospho-beta-D-ribosyl)imidazole-4-carboxamide. It participates in amino-acid biosynthesis; L-histidine biosynthesis; L-histidine from 5-phospho-alpha-D-ribose 1-diphosphate: step 4/9. In Thermosynechococcus vestitus (strain NIES-2133 / IAM M-273 / BP-1), this protein is 1-(5-phosphoribosyl)-5-[(5-phosphoribosylamino)methylideneamino] imidazole-4-carboxamide isomerase.